Consider the following 348-residue polypeptide: Dihydroorotase (348 aa).

Positions 14 and 16 each coordinate Zn(2+). Substrate is bound by residues 16–18 (HLR) and asparagine 42. Positions 100, 137, and 175 each coordinate Zn(2+). N6-carboxylysine is present on lysine 100. Residue histidine 137 participates in substrate binding. A substrate-binding site is contributed by leucine 220. Aspartate 248 contacts Zn(2+). Aspartate 248 is a catalytic residue. Substrate contacts are provided by histidine 252 and alanine 264.

This sequence belongs to the metallo-dependent hydrolases superfamily. DHOase family. Class II DHOase subfamily. Homodimer. It depends on Zn(2+) as a cofactor.

The catalysed reaction is (S)-dihydroorotate + H2O = N-carbamoyl-L-aspartate + H(+). It functions in the pathway pyrimidine metabolism; UMP biosynthesis via de novo pathway; (S)-dihydroorotate from bicarbonate: step 3/3. Its function is as follows. Catalyzes the reversible cyclization of carbamoyl aspartate to dihydroorotate. This chain is Dihydroorotase, found in Pseudomonas putida (strain W619).